The sequence spans 277 residues: Carbonyl reductase [NADPH] 3 (277 aa).

Ser-2 is subject to N-acetylserine. Residues 10-34 (VTGANKGIGFAITRDLCRKFSGDVV), 38-42 (RDEAR), 63-64 (DI), and Asn-90 each bind NADP(+). Phosphoserine is present on Ser-30. A substrate-binding site is contributed by Ser-140. Tyr-194 (proton acceptor) is an active-site residue. Residue 194-198 (YGVSK) participates in NADP(+) binding.

The protein belongs to the short-chain dehydrogenases/reductases (SDR) family.

Its subcellular location is the cytoplasm. It carries out the reaction a secondary alcohol + NADP(+) = a ketone + NADPH + H(+). The catalysed reaction is a quinone + NADPH + H(+) = a quinol + NADP(+). Functionally, catalyzes the NADPH-dependent reduction of carbonyl compounds to their corresponding alcohols. Has low NADPH-dependent oxidoreductase activity. Acts on several orthoquinones, as well as on non-quinone compounds, such as isatin or on the anticancer drug oracin. Best substrates for CBR3 is 1,2- naphthoquinone, hence could play a role in protection against cytotoxicity of exogenous quinones. Exerts activity toward ortho-quinones but not paraquinones. No endogenous substrate for CBR3 except isatin has been identified. The polypeptide is Carbonyl reductase [NADPH] 3 (Cbr3) (Mus musculus (Mouse)).